We begin with the raw amino-acid sequence, 147 residues long: Ribosomal RNA large subunit methyltransferase H (147 aa).

S-adenosyl-L-methionine-binding positions include Leu64, Gly96, and 115-120 (FSKMTF).

The protein belongs to the RNA methyltransferase RlmH family. Homodimer.

The protein resides in the cytoplasm. The catalysed reaction is pseudouridine(1915) in 23S rRNA + S-adenosyl-L-methionine = N(3)-methylpseudouridine(1915) in 23S rRNA + S-adenosyl-L-homocysteine + H(+). Its function is as follows. Specifically methylates the pseudouridine at position 1915 (m3Psi1915) in 23S rRNA. The protein is Ribosomal RNA large subunit methyltransferase H of Acholeplasma laidlawii (strain PG-8A).